A 317-amino-acid polypeptide reads, in one-letter code: METWQEVTVHVHRDAQEAVSHVLIETGSQGVAIADSADYIGQKDRFGELYPDVEQSDMIAITAYYPSSTNLADVTVTINEQLAELASFGLQVGQVTVDSQELAEEDWADNWKKYYEPARITHDLTIVPSWTDYDASAGEKVIKLDPGMAFGTGTHPTTKMSLFAVEQILRGGETVIDVGTGSGVLSIASSLLGAKTIYAYDLDDVAVRVAQENIDLNQGTDNIHVAAGDLLKGVSQEADVIVANILADILVLLTDDAYRLVKDQGYLILSGIISEKLDMVLEAAFSAGFFLETHMIQGEWNALVFKKTDDISGVIGG.

S-adenosyl-L-methionine is bound by residues Thr-158, Gly-179, Asp-201, and Asn-244.

This sequence belongs to the methyltransferase superfamily. PrmA family.

It localises to the cytoplasm. The catalysed reaction is L-lysyl-[protein] + 3 S-adenosyl-L-methionine = N(6),N(6),N(6)-trimethyl-L-lysyl-[protein] + 3 S-adenosyl-L-homocysteine + 3 H(+). Methylates ribosomal protein L11. The protein is Ribosomal protein L11 methyltransferase of Streptococcus pyogenes serotype M4 (strain MGAS10750).